We begin with the raw amino-acid sequence, 374 residues long: Putative glutamate--cysteine ligase 2-1 (374 aa).

The protein belongs to the glutamate--cysteine ligase type 2 family. YbdK subfamily.

The enzyme catalyses L-cysteine + L-glutamate + ATP = gamma-L-glutamyl-L-cysteine + ADP + phosphate + H(+). Its function is as follows. ATP-dependent carboxylate-amine ligase which exhibits weak glutamate--cysteine ligase activity. The chain is Putative glutamate--cysteine ligase 2-1 from Saccharopolyspora erythraea (strain ATCC 11635 / DSM 40517 / JCM 4748 / NBRC 13426 / NCIMB 8594 / NRRL 2338).